The following is an 80-amino-acid chain: Kappa-actitoxin-Avd4f (80 aa).

The N-terminal stretch at 1–19 (MNKALFLCLVVLCAAVVFA) is a signal peptide. A propeptide spanning residues 20-31 (AEDLQKAKHAPF) is cleaved from the precursor. 3 cysteine pairs are disulfide-bonded: C41/C76, C43/C69, and C59/C77.

It belongs to the sea anemone type 3 (BDS) potassium channel toxin family. Moderately expressed in the ectodermal tissue from the distal and proximal tentacles, body wall, and oral disk.

Its subcellular location is the secreted. It is found in the nematocyst. Blocks Kv3 voltage-gated potassium channels. Reduces blood pressure. The chain is Kappa-actitoxin-Avd4f from Anemonia viridis (Snakelocks anemone).